The chain runs to 30 residues: Cysteine-rich venom protein hematin (30 aa).

The protein belongs to the CRISP family. Post-translationally, contains 8 disulfide bonds. Expressed by the venom gland.

It localises to the secreted. Inhibits calcium-activated potassium channels (KCa), voltage-gated potassium channel (Kv), and the calcium release channel/ryanodine receptor (RyR). In Hemachatus haemachatus (Rinkhals), this protein is Cysteine-rich venom protein hematin.